The primary structure comprises 196 residues: Translation initiation factor IF-3 (196 aa).

It belongs to the IF-3 family. In terms of assembly, monomer.

It is found in the cytoplasm. Its function is as follows. IF-3 binds to the 30S ribosomal subunit and shifts the equilibrium between 70S ribosomes and their 50S and 30S subunits in favor of the free subunits, thus enhancing the availability of 30S subunits on which protein synthesis initiation begins. The polypeptide is Translation initiation factor IF-3 (Wigglesworthia glossinidia brevipalpis).